A 1051-amino-acid polypeptide reads, in one-letter code: Exportin-T (1051 aa).

This sequence belongs to the exportin family.

The protein localises to the nucleus. Its subcellular location is the cytoplasm. Functionally, tRNA nucleus export receptor which facilitates tRNA translocation across the nuclear pore complex. Involved in pre-tRNA splicing, probably by affecting the interaction of pre-tRNA with splicing endonuclease. The chain is Exportin-T (LOS1) from Eremothecium gossypii (strain ATCC 10895 / CBS 109.51 / FGSC 9923 / NRRL Y-1056) (Yeast).